The primary structure comprises 61 residues: Metallothionein-1B (61 aa).

Residues 1-29 (MDPNCSCPTSGSCSCAGSCTCKACRCPSC) form a beta region. A divalent metal cation is bound by residues C5, C7, C13, C15, C19, C21, C24, C26, C29, C33, C34, C36, C37, C41, C44, C48, C50, C57, C59, and C60. Positions 30–61 (KKSCCSCCPVGCAKCAQGCVCKGASDKCSCCA) are alpha.

The protein belongs to the metallothionein superfamily. Type 1 family.

Functionally, metallothioneins have a high content of cysteine residues that bind various heavy metals; these proteins are transcriptionally regulated by both heavy metals and glucocorticoids. The polypeptide is Metallothionein-1B (MT1B) (Ovis aries (Sheep)).